Consider the following 423-residue polypeptide: Ferrochelatase, mitochondrial (423 aa).

A mitochondrion-targeting transit peptide spans 1–29 (MISRKIISTINSKTFYNKSLSYCTVNNNK). A [2Fe-2S] cluster-binding site is contributed by Cys173. Residues His207 and Asp380 contribute to the active site. 3 residues coordinate [2Fe-2S] cluster: Cys401, Cys404, and Cys411.

It belongs to the ferrochelatase family. As to quaternary structure, monomer. It depends on [2Fe-2S] cluster as a cofactor.

The protein resides in the mitochondrion inner membrane. The catalysed reaction is heme b + 2 H(+) = protoporphyrin IX + Fe(2+). Its pathway is porphyrin-containing compound metabolism; protoheme biosynthesis; protoheme from protoporphyrin-IX: step 1/1. In terms of biological role, catalyzes the ferrous insertion into protoporphyrin IX. This is Ferrochelatase, mitochondrial (hemH) from Dictyostelium discoideum (Social amoeba).